Reading from the N-terminus, the 825-residue chain is Endochitinase A1 (825 aa).

The N-terminal stretch at 1 to 22 (MVSSKLSFVATAVAALAPLASA) is a signal peptide. The GH18 domain occupies 29–338 (SNLAIYWGQG…DHMKDILLHC (310 aa)). The active-site Proton donor is the glutamate 174. 3 disordered regions span residues 338-568 (CDPS…TTTA), 680-736 (PVTE…VSTS), and 750-792 (PLIL…YTQE). Positions 344 to 554 (VTSSSAVPSS…STDESSTTVG (211 aa)) are enriched in low complexity. A glycan (N-linked (GlcNAc...) asparagine) is linked at asparagine 559. The span at 701–712 (EGSNPTQPSGAS) shows a compositional bias: polar residues. N-linked (GlcNAc...) asparagine glycosylation occurs at asparagine 717. Polar residues predominate over residues 772–792 (PSGQNSGSSSHVPIPPSYTQE). Glycine 800 carries GPI-anchor amidated glycine lipidation. Residues 801–825 (AASRVTGLGHGLVLTVLTLSAFFVL) constitute a propeptide, removed in mature form.

The protein belongs to the glycosyl hydrolase 18 family. Chitinase class III subfamily. In terms of processing, O-mannosylated by pmt4.

It is found in the cell membrane. The protein localises to the secreted. Its subcellular location is the cell wall. The enzyme catalyses Random endo-hydrolysis of N-acetyl-beta-D-glucosaminide (1-&gt;4)-beta-linkages in chitin and chitodextrins.. The cyclic peptide natural product argifin acts as a specific inhibitor. Functionally, GPI-anchored chitinase involved in the degradation of chitin, a component of the cell walls of fungi and exoskeletal elements of some animals (including worms and arthropods). Required to reshape the cell wall at the sites where cell wall remodeling and/or cell wall maturation actively take place such as sites of conidia formation. In Aspergillus fumigatus (Neosartorya fumigata), this protein is Endochitinase A1 (chiA1).